The primary structure comprises 232 residues: Ion-translocating oxidoreductase complex subunit E (232 aa).

The next 6 helical transmembrane spans lie at 18-38, 39-59, 69-89, 93-113, 127-147, and 182-202; these read GLVQLLGLCPLLAVTATITNA, LGLGVATMLVLIGSNILVSLV, IPVFVMIIAALVTTVQLLINA, GLYLSLGIFLPLIVTNCIIIG, AAFDGLMMGLGFTLVLAVLGA, and PFLLAMLPPGAFIVMGLLIAL.

The protein belongs to the NqrDE/RnfAE family. The complex is composed of six subunits: RnfA, RnfB, RnfC, RnfD, RnfE and RnfG.

It localises to the cell inner membrane. Part of a membrane-bound complex that couples electron transfer with translocation of ions across the membrane. In Shewanella sp. (strain W3-18-1), this protein is Ion-translocating oxidoreductase complex subunit E.